Here is a 264-residue protein sequence, read N- to C-terminus: Outer kinetochore KNL1 complex subunit sos7 (264 aa).

Residues 90 to 236 (EAEDNEKLET…SNQIKAAIHT (147 aa)) adopt a coiled-coil conformation.

Belongs to the KRE28 family. In terms of assembly, component of the KNL1/SPC105 complex composed of at least spc7 and sos7. Part of the outer kinetochore KMN network that includes the KNL1, MIS12 and NDC80 complexes. Interacts (via C-terminus) with spc7 (via C-terminus); the interaction is direct.

The protein resides in the nucleus. It localises to the chromosome. It is found in the centromere. The protein localises to the kinetochore. In terms of biological role, acts as a component of the outer kinetochore KNL1 complex that facilitates microtubule-kinetochore interactions and the spindle assembly checkpoint. Kinetochores, consisting of a centromere-associated inner segment and a microtubule-contacting outer segment, play a crucial role in chromosome segregation by mediating the physical connection between centromeric DNA and spindle microtubules. The outer kinetochore is made up of the ten-subunit KMN network, comprising the MIS12, NDC80 and KNL1 complexes, and auxiliary microtubule-associated components; together they connect the outer kinetochore with the inner kinetochore, bind microtubules, and mediate interactions with mitotic checkpoint proteins that delay anaphase until chromosomes are bioriented on the spindle. This Schizosaccharomyces pombe (strain 972 / ATCC 24843) (Fission yeast) protein is Outer kinetochore KNL1 complex subunit sos7 (sos7).